The following is a 660-amino-acid chain: Arginine--tRNA ligase, cytoplasmic (660 aa).

N-acetylmethionine is present on Met-1. Residues 1–72 form a could be involved in the assembly of the multisynthetase complex region; it reads MDGLVAQCSA…QEERRKPTKN (72 aa). L-arginine-binding positions include 200–202, His-211, Tyr-384, Asp-388, and Gln-412; that span reads SPN. A 'HIGH' region motif is present at residues 201–212; it reads PNIAKEMHVGHL. The segment at 529-543 is interaction with tRNA; that stretch reads NTAAYLLYAFTRIRS.

It belongs to the class-I aminoacyl-tRNA synthetase family. As to quaternary structure, interacts (via N-terminus) with AIMP1 (via N-terminus); this stimulates its catalytic activity. Interacts (via N-terminus) with LARS2 (via C-terminus). Monomer. Part of a multisubunit complex that groups tRNA ligases for Arg (RARS1), Asp (DARS1), Gln (QARS1), Ile (IARS1), Leu (LARS1), Lys (KARS1), Met (MARS1) the bifunctional ligase for Glu and Pro (EPRS1) and the auxiliary subunits AIMP1/p43, AIMP2/p38 and EEF1E1/p18. Interacts with QARS1. Part of a complex composed of RARS1, QARS1 and AIMP1.

Its subcellular location is the cytoplasm. The protein resides in the cytosol. It catalyses the reaction tRNA(Arg) + L-arginine + ATP = L-arginyl-tRNA(Arg) + AMP + diphosphate. Its function is as follows. Forms part of a macromolecular complex that catalyzes the attachment of specific amino acids to cognate tRNAs during protein synthesis. Modulates the secretion of AIMP1 and may be involved in generation of the inflammatory cytokine EMAP2 from AIMP1. The polypeptide is Arginine--tRNA ligase, cytoplasmic (Rars1) (Mus musculus (Mouse)).